We begin with the raw amino-acid sequence, 987 residues long: MTSAAAVRSPGRRRAAVWTTLGVIVALVILFFIFAGLYADILWYQQFGFLSVLTTQWFAAIAMFFVGFLGMALPLWVVIQLAYRLRPVYAKLNSQLDRYQQVIEPLRRLAMYGIPIVFGIFAGVSAASRWQTAAMWINGTPYGKTDPLFHLDIGFYLFALPFYRSAVGFASAVVLISLLATLATCYLYGSIRLSGREVRIARAARVQISVIAAVYLLLQGVSVWLDRYATVTDANVNNMINGAAYTDVSATIPGQAVLAVAAVFVALLFAVTAFTGRWRFPVVGTALLIVAALVIGAIYPWAIQRFQVEPSQKTLETPYIQDSIEATRDAYGLSDIDVVPYNATTSAEAGALRQDAQTTAQIRIMDPAVISPSFQQLQQFRQYYSFPRNLNVDRYTLNGSQQDAVVSVRELNQSGLTSRSWYNDTVVYTHGYGMVAAYGNQRSSDGQPVFMEYGIPTQGTFGAYEPRVYFGQQSPTYSIVGAQKSAKSIELDYPGGDNDAQQTYTTFSGDGGPKLDNIFNRLVYALKFQDEQIVLSTAVNKDSQILYDRDPIKRVKKAAPYLTMDSQAYPAVIDGRIKWVVDGYTTSNQFPYSHVGSLSDAIADTETPKSAYAFDDINYIRNSVKATVDAYDGSVTLYAWDAKDPVLKTWQKIFPSTIKPISAMSAQLLQHVRYPSDLFKVQRSVLGQYHVTDAGSFYSRDDAWTTPNDPTSSPTDPTLQPPYYLTMQMPGQKAPTFSLYTTFIPQAASDSSRSILKGYLAVDADAGSTKGKVAPGYGKLRLLSLPSSDTIPGPGQVQNNFNSDPTVSQELNLLRQGKTDVTNGNLLTLPVGGGLLYVQPVYVKSTGETSYPILQKVLVAFGDKIAFEDTLDQALDSLFGGDSGATAGDNNVPATPGGSGGGSSGDAGSSAGGGSSGGGGSSAGGSSSGSGSSGTQSNAALQRALQQAKQALSDREAALKAGDWAAYGAADSRLQQALQAAIAAEGR.

The next 7 helical transmembrane spans lie at 17-37, 59-79, 108-128, 167-187, 206-226, 256-276, and 283-303; these read VWTT…FAGL, AAIA…WVVI, RLAM…SAAS, VGFA…TCYL, VQIS…VWLD, AVLA…AFTG, and VGTA…PWAI. Disordered stretches follow at residues 700 to 719 and 886 to 947; these read RDDA…DPTL and TAGD…ALQQ. Positions 705–719 are enriched in low complexity; the sequence is TTPNDPTSSPTDPTL. Over residues 897-932 the composition is skewed to gly residues; it reads GGSGGGSSGDAGSSAGGGSSGGGGSSAGGSSSGSGS. The span at 933-947 shows a compositional bias: low complexity; the sequence is SGTQSNAALQRALQQ.

It belongs to the UPF0182 family.

It localises to the cell membrane. The protein is UPF0182 protein Lxx09300 of Leifsonia xyli subsp. xyli (strain CTCB07).